A 331-amino-acid chain; its full sequence is Spondin-2 (331 aa).

Positions 1-26 (MENPSPAAALGKALCALLLATLGAAG) are cleaved as a signal peptide. Residues 31 to 221 (GESICSARAL…EITSSSPSHP (191 aa)) form the Spondin domain. Cys35 and Cys171 form a disulfide bridge. Glu141 contributes to the a divalent metal cation binding site. Ca(2+) contacts are provided by Asp160, Asp188, and Asp192. The region spanning 277 to 331 (DCEVSLWSSWGLCGGHCGRLGTKSRTRYVRVQPANNGSPCPELEEEAECVPDNCV) is the TSP type-1 domain. Trp283 is a glycosylation site (C-linked (Man) tryptophan).

As to quaternary structure, monomer. Interacts with integrin. As to expression, expressed in normal lung tissue but not in lung carcinoma cell lines.

Its subcellular location is the secreted. The protein localises to the extracellular space. The protein resides in the extracellular matrix. Cell adhesion protein that promotes adhesion and outgrowth of hippocampal embryonic neurons. Binds directly to bacteria and their components and functions as an opsonin for macrophage phagocytosis of bacteria. Essential in the initiation of the innate immune response and represents a unique pattern-recognition molecule in the ECM for microbial pathogens. Binds bacterial lipopolysaccharide (LPS). This Homo sapiens (Human) protein is Spondin-2 (SPON2).